The sequence spans 692 residues: Elongation factor G (692 aa).

The tr-type G domain maps to 8-283 (DHVRNIGIMA…AVVDYFPSPS (276 aa)). Residues 17-24 (AHIDAGKT), 81-85 (DTPGH), and 135-138 (NKMD) each bind GTP.

Belongs to the TRAFAC class translation factor GTPase superfamily. Classic translation factor GTPase family. EF-G/EF-2 subfamily.

Its subcellular location is the cytoplasm. Its function is as follows. Catalyzes the GTP-dependent ribosomal translocation step during translation elongation. During this step, the ribosome changes from the pre-translocational (PRE) to the post-translocational (POST) state as the newly formed A-site-bound peptidyl-tRNA and P-site-bound deacylated tRNA move to the P and E sites, respectively. Catalyzes the coordinated movement of the two tRNA molecules, the mRNA and conformational changes in the ribosome. The sequence is that of Elongation factor G from Magnetococcus marinus (strain ATCC BAA-1437 / JCM 17883 / MC-1).